A 357-amino-acid chain; its full sequence is Histidine biosynthesis bifunctional protein HisB (357 aa).

A histidinol-phosphatase region spans residues 1-168 (MSEKVLFIDR…IVFKLTKKHD (168 aa)). Asp9 serves as the catalytic Nucleophile. Positions 9 and 11 each coordinate Mg(2+). The Proton donor role is filled by Asp11. The Zn(2+) site is built by Cys93, His95, Cys101, and Cys103. Residue Asp130 coordinates Mg(2+). The imidazoleglycerol-phosphate dehydratase stretch occupies residues 169 to 357 (RHAKVVRNTK…KNLPSSKGLL (189 aa)).

The protein in the N-terminal section; belongs to the histidinol-phosphatase family. It in the C-terminal section; belongs to the imidazoleglycerol-phosphate dehydratase family. It depends on Mg(2+) as a cofactor. Zn(2+) is required as a cofactor.

It localises to the cytoplasm. It catalyses the reaction D-erythro-1-(imidazol-4-yl)glycerol 3-phosphate = 3-(imidazol-4-yl)-2-oxopropyl phosphate + H2O. The enzyme catalyses L-histidinol phosphate + H2O = L-histidinol + phosphate. The protein operates within amino-acid biosynthesis; L-histidine biosynthesis; L-histidine from 5-phospho-alpha-D-ribose 1-diphosphate: step 6/9. It participates in amino-acid biosynthesis; L-histidine biosynthesis; L-histidine from 5-phospho-alpha-D-ribose 1-diphosphate: step 8/9. The chain is Histidine biosynthesis bifunctional protein HisB from Buchnera aphidicola subsp. Baizongia pistaciae (strain Bp).